The sequence spans 2725 residues: Teneurin-1 (2725 aa).

The interval 1–48 (MEQTDCKPYQPLPKVKHEMDLAYTSSSDESEDGRKPRQSYNSRETLHE) is disordered. The Teneurin N-terminal domain occupies 1–318 (MEQTDCKPYQ…KPYRCCNWKC (318 aa)). The Cytoplasmic segment spans residues 1-324 (MEQTDCKPYQ…NWKCTALSAT (324 aa)). The Nuclear localization signal (NLS) signature appears at 62–65 (RKRK). Ser-105 carries the phosphoserine modification. The residue at position 109 (Thr-109) is a Phosphothreonine. Position 116 is a phosphoserine (Ser-116). Residues 174 to 189 (AGSTQDVQSSPHNQFT) are compositionally biased toward polar residues. A disordered region spans residues 174 to 241 (AGSTQDVQSS…PAPPTSTQDS (68 aa)). Pro residues predominate over residues 192-201 (PLPPPPPPPH). A Required for interaction with SORBS1 (Ten-1 ICD form) motif is present at residues 290-297 (PPPRPLPR). Residues 325–345 (AITVTLALLLAYVIAVHLFGL) traverse the membrane as a helical segment. Over 346–2725 (TWQLQPVEGE…FMRQSEIGRR (2380 aa)) the chain is Extracellular. Asn-433 is a glycosylation site (N-linked (GlcNAc...) asparagine). EGF-like domains lie at 528–559 (IMDD…PDCA), 560–591 (RDSC…ECDV), 592–624 (PEEQ…EICE), 625–657 (EEDC…NCET), 658–691 (PLPV…SDCS), 692–721 (TELC…GPTC), 722–753 (EERS…DHCT), and 761–796 (VRDG…TGCN). Disulfide bonds link Cys-532-Cys-542, Cys-536-Cys-547, Cys-549-Cys-558, Cys-567-Cys-578, Cys-580-Cys-589, Cys-596-Cys-607, Cys-601-Cys-612, Cys-614-Cys-623, Cys-628-Cys-639, Cys-633-Cys-644, Cys-646-Cys-655, Cys-666-Cys-679, Cys-681-Cys-690, Cys-695-Cys-705, Cys-699-Cys-710, Cys-712-Cys-721, Cys-726-Cys-736, Cys-730-Cys-741, Cys-743-Cys-752, Cys-765-Cys-775, Cys-769-Cys-784, and Cys-786-Cys-795. N-linked (GlcNAc...) asparagine glycans are attached at residues Asn-905 and Asn-1084. NHL repeat units follow at residues 1194-1219 (LFAP…VRRI), 1292-1336 (SHCG…NAVI), 1351-1402 (LSCD…IAGR), 1414-1458 (FLVS…VTTN), and 1481-1524 (CFSG…ISRN). One copy of the YD 1 repeat lies at 1534 to 1553 (YEIASPADQELYQFTVNGTH). Asn-1550 and Asn-1567 each carry an N-linked (GlcNAc...) asparagine glycan. YD repeat units lie at residues 1570–1590 (YNSE…VHIR), 1608–1632 (YWLT…ALMT), 1633–1654 (YPGN…TVYE), and 1655–1675 (YDPE…SSFH). N-linked (GlcNAc...) asparagine glycosylation is found at Asn-1663, Asn-1699, Asn-1757, Asn-1781, and Asn-1842. YD repeat units follow at residues 1845 to 1864 (YSPS…EKME), 1865 to 1885 (YDQS…WSYT), 1886 to 1904 (YLEK…YIFE), 1905 to 1925 (YDQP…HSLQ), 1933 to 1949 (YRNI…FIQD), 1950 to 1969 (YSRD…RRVL), 1970 to 1989 (YKYT…TQVT), 1992 to 2012 (YEES…FICT), 2015 to 2035 (YRQT…EGLV), 2085 to 2105 (YDLN…FSAN), and 2113 to 2133 (YEIL…VGRM). N-linked (GlcNAc...) asparagine glycosylation occurs at Asn-2145. YD repeat units follow at residues 2153 to 2173 (YDAD…WRYS), 2174 to 2194 (YDLN…LTPL), 2196 to 2216 (YDLR…DEDG), 2228 to 2248 (YNSN…TVQY), and 2250 to 2270 (YDGL…LQFF). Asn-2285 carries N-linked (GlcNAc...) asparagine glycosylation. YD repeat units follow at residues 2296–2313 (YDLQ…GEEY) and 2314–2337 (YVAC…IKEI). Residue Ser-2580 is modified to Phosphoserine. The N-linked (GlcNAc...) asparagine glycan is linked to Asn-2602.

Belongs to the tenascin family. Teneurin subfamily. In terms of assembly, homodimer; disulfide-linked. Heterodimer with either TENM2 or TENM3. May also form heterodimer with TENM4. Ten-1 ICD interacts with SORBS1 (via third SH3 domain). Interacts with MBD1. Ten-1 ICD interacts with HINT1. In terms of processing, derives from the plasma membrane form by proteolytic processing. Further proteolytic cleavage may be generated. As to expression, expressed in fetal brain.

The protein localises to the cell membrane. It is found in the nucleus. It localises to the nucleus speckle. Its subcellular location is the nucleus matrix. The protein resides in the cytoplasm. The protein localises to the cytoskeleton. Its function is as follows. Involved in neural development, regulating the establishment of proper connectivity within the nervous system. May function as a cellular signal transducer. Plays a role in the regulation of neuroplasticity in the limbic system. Mediates a rapid reorganization of actin- and tubulin-based cytoskeleton elements with an increase in dendritic arborization and spine density formation of neurons in the hippocampus and amygdala. Induces BDNF transcription inhibition in neurons. Activates the mitogen-activated protein (MAP) kinase 2 (MEK2) and extracellular signal-regulated kinase (ERK) cascade. Also acts as a bioactive neuroprotective peptide on limbic neurons of the brain and regulates stress-induced behavior: attenuates alkalosis-associated necrotic cell death and the effects of corticotropin-releasing factor (CRF) on c-fos/FOS induction and on the reinstatement of cocaine seeking. In terms of biological role, induces gene transcription activation. The protein is Teneurin-1 (TENM1) of Homo sapiens (Human).